A 358-amino-acid chain; its full sequence is UDP-N-acetylglucosamine--N-acetylmuramyl-(pentapeptide) pyrophosphoryl-undecaprenol N-acetylglucosamine transferase (358 aa).

Residues 12–14 (TGG), N124, R162, S185, I242, 261–266 (ALTVSE), and Q287 each bind UDP-N-acetyl-alpha-D-glucosamine.

This sequence belongs to the glycosyltransferase 28 family. MurG subfamily.

The protein localises to the cell inner membrane. The enzyme catalyses di-trans,octa-cis-undecaprenyl diphospho-N-acetyl-alpha-D-muramoyl-L-alanyl-D-glutamyl-meso-2,6-diaminopimeloyl-D-alanyl-D-alanine + UDP-N-acetyl-alpha-D-glucosamine = di-trans,octa-cis-undecaprenyl diphospho-[N-acetyl-alpha-D-glucosaminyl-(1-&gt;4)]-N-acetyl-alpha-D-muramoyl-L-alanyl-D-glutamyl-meso-2,6-diaminopimeloyl-D-alanyl-D-alanine + UDP + H(+). Its pathway is cell wall biogenesis; peptidoglycan biosynthesis. Cell wall formation. Catalyzes the transfer of a GlcNAc subunit on undecaprenyl-pyrophosphoryl-MurNAc-pentapeptide (lipid intermediate I) to form undecaprenyl-pyrophosphoryl-MurNAc-(pentapeptide)GlcNAc (lipid intermediate II). In Pseudoalteromonas translucida (strain TAC 125), this protein is UDP-N-acetylglucosamine--N-acetylmuramyl-(pentapeptide) pyrophosphoryl-undecaprenol N-acetylglucosamine transferase.